A 539-amino-acid chain; its full sequence is Cytochrome c oxidase subunit 1 homolog, bacteroid (539 aa).

3 consecutive transmembrane segments (helical) span residues Thr-4–Ala-24, Leu-28–Met-48, and Gly-75–Leu-95. His-117 is a binding site for heme b. Helical transmembrane passes span Thr-118–Val-138, Phe-154–Ile-174, Val-187–Met-207, Ile-214–Val-234, Gly-265–Ile-285, Leu-298–Leu-318, Leu-330–Leu-350, and Met-368–Ile-388. Residues His-266, His-316, and His-317 each contribute to the Cu cation site. Heme b is bound by residues His-404 and His-406. 4 helical membrane-spanning segments follow: residues Val-405–Val-425, His-443–Ile-463, Gln-475–Met-495, and Gly-499–Leu-519.

The protein belongs to the heme-copper respiratory oxidase family. The cofactor is Cu(2+). Requires heme b as cofactor.

The protein resides in the cell membrane. The catalysed reaction is 4 Fe(II)-[cytochrome c] + O2 + 8 H(+)(in) = 4 Fe(III)-[cytochrome c] + 2 H2O + 4 H(+)(out). It functions in the pathway energy metabolism; oxidative phosphorylation. Its function is as follows. Cytochrome c oxidase is the component of the respiratory chain that catalyzes the reduction of oxygen to water. Subunits 1-3 form the functional core of the enzyme complex. Co I is the catalytic subunit of the enzyme. Electrons originating in cytochrome c or a quinol are transferred to the bimetallic center formed by a high-spin heme and copper B. This is Cytochrome c oxidase subunit 1 homolog, bacteroid (fixN) from Rhizobium meliloti (strain 1021) (Ensifer meliloti).